Reading from the N-terminus, the 195-residue chain is Meiotically up-regulated gene 84 protein (195 aa).

Topologically, residues 1 to 84 are cytoplasmic; the sequence is MTLTHHSTFI…IMVKVPTYEY (84 aa). A helical membrane pass occupies residues 85–105; that stretch reads YGFVMYLVSMLGFGVYIVWAL. The Lumenal portion of the chain corresponds to 106–122; the sequence is TPAPVLKFFEIHYYLSR. The helical transmembrane segment at 123–143 threads the bilayer; the sequence is WWALAIPTWLFVLVIYIHVVL. Residues 144-195 are Cytoplasmic-facing; it reads NAYNTEVLTKPFSSLECIVDQYALVGEEDGAAHGRVVDLRLCDVNKQQLEET.

The protein resides in the endoplasmic reticulum membrane. Has a role in meiosis. The polypeptide is Meiotically up-regulated gene 84 protein (mug84) (Schizosaccharomyces pombe (strain 972 / ATCC 24843) (Fission yeast)).